Reading from the N-terminus, the 958-residue chain is Voltage-gated inwardly rectifying potassium channel KCNH6 (958 aa).

Over 1 to 261 (MPVRRGHVAP…YSPFKAVWDW (261 aa)) the chain is Cytoplasmic. Residues 41–70 (IIYCNDGFCELFGYSRVEVMQQPCTCDFLT) enclose the PAS domain. Residues 92 to 144 (CKVDILYYRKDASSFRCLVDVVPVKNEDGAVIMFILNFEDLAQLLAKCSSRSL) enclose the PAC domain. The chain crosses the membrane as a helical span at residues 262 to 282 (LILLLVIYTAVFTPYSAAFLL). The Extracellular segment spans residues 283–298 (SDQDESRRGACSYTCS). The chain crosses the membrane as a helical span at residues 299–319 (PLTVVDLIVDIMFVVDIVINF). Residues 320–340 (RTTYVNTNDEVVSHPRRIAVH) lie on the Cytoplasmic side of the membrane. The helical transmembrane segment at 341–361 (YFKGWFLIDMVAAIPFDLLIF) threads the bilayer. At 362–370 (RTGSDETTT) the chain is on the extracellular side. A helical; Voltage-sensor transmembrane segment spans residues 371-391 (LIGLLKTARLLRLVRVARKLD). Over 392-398 (RYSEYGA) the chain is Cytoplasmic. The helical transmembrane segment at 399-419 (AVLFLLMCTFALIAHWLACIW) threads the bilayer. Topologically, residues 420-463 (YAIGNVERPYLEHKIGWLDSLGVQLGKRYNGSDPASGPSVQDKY) are extracellular. Asn449 carries N-linked (GlcNAc...) (complex) asparagine glycosylation. An intramembrane region (pore-forming) is located at residues 464–484 (VTALYFTFSSLTSVGFGNVSP). The Selectivity filter motif lies at 476–481 (SVGFGN). The Extracellular segment spans residues 485–490 (NTNSEK). Residues 491–511 (VFSICVMLIGSLMYASIFGNV) form a helical membrane-spanning segment. The Cytoplasmic segment spans residues 512-958 (SAIIQRLYSG…DPGFAGSWGH (447 aa)). Residues 594 to 694 (AFSGAGKGCL…IQRADLLEVL (101 aa)) form a cNMP-binding domain region. Disordered stretches follow at residues 720–751 (GLHS…PPLS) and 845–910 (TTSP…PPLA). Over residues 724–745 (SPRQAPGSQDHQGFFLSDNQSD) the composition is skewed to polar residues.

This sequence belongs to the potassium channel family. H (Eag) (TC 1.A.1.20) subfamily. Kv11.2/KCNH6 sub-subfamily. The potassium channel is probably composed of a homo- or heterotetrameric complex of pore-forming alpha subunits that can associate only within their subfamily. As to expression, expressed in prolactin-secreting adenomas.

It is found in the cell membrane. The enzyme catalyses K(+)(in) = K(+)(out). Pore-forming (alpha) subunit of voltage-gated inwardly rectifying potassium channel. Characterized by unusual gating kinetics by producing relatively small outward currents during membrane depolarization and large inward currents during subsequent repolarization which reflect a rapid inactivation during depolarization and quick recovery from inactivation but slow deactivation (closing) during repolarization. Activates even more slowly than KCNH2. In Homo sapiens (Human), this protein is Voltage-gated inwardly rectifying potassium channel KCNH6.